A 286-amino-acid polypeptide reads, in one-letter code: 1D-myo-inositol 2-acetamido-2-deoxy-alpha-D-glucopyranoside deacetylase (286 aa).

Zn(2+)-binding residues include His12, Asp15, and His147.

It belongs to the MshB deacetylase family. It depends on Zn(2+) as a cofactor.

The enzyme catalyses 1D-myo-inositol 2-acetamido-2-deoxy-alpha-D-glucopyranoside + H2O = 1D-myo-inositol 2-amino-2-deoxy-alpha-D-glucopyranoside + acetate. Its function is as follows. Catalyzes the deacetylation of 1D-myo-inositol 2-acetamido-2-deoxy-alpha-D-glucopyranoside (GlcNAc-Ins) in the mycothiol biosynthesis pathway. The chain is 1D-myo-inositol 2-acetamido-2-deoxy-alpha-D-glucopyranoside deacetylase from Thermobifida fusca (strain YX).